The following is a 181-amino-acid chain: ATP-dependent protease subunit HslV (181 aa).

Thr7 is an active-site residue. Na(+)-binding residues include Gly164, Cys167, and Thr170.

Belongs to the peptidase T1B family. HslV subfamily. In terms of assembly, a double ring-shaped homohexamer of HslV is capped on each side by a ring-shaped HslU homohexamer. The assembly of the HslU/HslV complex is dependent on binding of ATP.

Its subcellular location is the cytoplasm. The enzyme catalyses ATP-dependent cleavage of peptide bonds with broad specificity.. Its activity is regulated as follows. Allosterically activated by HslU binding. Protease subunit of a proteasome-like degradation complex believed to be a general protein degrading machinery. This is ATP-dependent protease subunit HslV from Shouchella clausii (strain KSM-K16) (Alkalihalobacillus clausii).